The primary structure comprises 306 residues: Dihydroorotate dehydrogenase B (NAD(+)), catalytic subunit (306 aa).

FMN-binding positions include Ser22 and 46-47 (KT). Substrate contacts are provided by residues Lys46, 70–74 (NSIGL), and Asn128. Asn128 is a binding site for FMN. The Nucleophile role is filled by Cys131. FMN is bound at residue Lys164. 191 to 192 (NT) is a substrate binding site. FMN contacts are provided by residues Gly216, 242–243 (GG), and 264–265 (GS).

This sequence belongs to the dihydroorotate dehydrogenase family. Type 1 subfamily. Heterotetramer of 2 PyrK and 2 PyrD type B subunits. FMN serves as cofactor.

The protein localises to the cytoplasm. It catalyses the reaction (S)-dihydroorotate + NAD(+) = orotate + NADH + H(+). Its pathway is pyrimidine metabolism; UMP biosynthesis via de novo pathway; orotate from (S)-dihydroorotate (NAD(+) route): step 1/1. Catalyzes the conversion of dihydroorotate to orotate with NAD(+) as electron acceptor. This Endomicrobium trichonymphae protein is Dihydroorotate dehydrogenase B (NAD(+)), catalytic subunit (pyrD).